The primary structure comprises 334 residues: Methionine adenosyltransferase 2 subunit beta (334 aa).

Residues 37–40, 60–62, 71–72, cysteine 93, arginine 97, tyrosine 159, and leucine 185 each bind NADP(+); these read TGLL, YSR, and NL. A required for interaction with MAT2A region spans residues 319-334; sequence LWPFLVDKRWRQTVFH.

The protein belongs to the dTDP-4-dehydrorhamnose reductase family. MAT2B subfamily. In terms of assembly, heterotrimer; composed of a catalytic mat2a homodimer that binds one regulatory mat2b chain. Heterohexamer; composed of a central, catalytic mat2a homotetramer flanked on either side by a regulatory mat2b chain. NADP binding increases the affinity for mat2a.

The protein operates within amino-acid biosynthesis; S-adenosyl-L-methionine biosynthesis; S-adenosyl-L-methionine from L-methionine: step 1/1. In terms of biological role, regulatory subunit of S-adenosylmethionine synthetase 2, an enzyme that catalyzes the formation of S-adenosylmethionine from methionine and ATP. Regulates MAT2A catalytic activity by changing its kinetic properties, increasing its affinity for L-methionine. Can bind NADP (in vitro). The chain is Methionine adenosyltransferase 2 subunit beta (mat2b) from Xenopus tropicalis (Western clawed frog).